Here is a 188-residue protein sequence, read N- to C-terminus: Elongation factor P (188 aa).

Belongs to the elongation factor P family.

It is found in the cytoplasm. It participates in protein biosynthesis; polypeptide chain elongation. Involved in peptide bond synthesis. Stimulates efficient translation and peptide-bond synthesis on native or reconstituted 70S ribosomes in vitro. Probably functions indirectly by altering the affinity of the ribosome for aminoacyl-tRNA, thus increasing their reactivity as acceptors for peptidyl transferase. The polypeptide is Elongation factor P (Bacteroides fragilis (strain ATCC 25285 / DSM 2151 / CCUG 4856 / JCM 11019 / LMG 10263 / NCTC 9343 / Onslow / VPI 2553 / EN-2)).